An 840-amino-acid chain; its full sequence is Probable sulfate permease C869.05c (840 aa).

Transmembrane regions (helical) follow at residues 120–140 (WLINDLIAGITVGCVVVPQGM), 148–168 (LPSEYGLYSSFVGVAIYCFFA), 173–193 (VSIGPVAVMSLITAKVIANVM), 208–228 (LALLAGAITCGIGLLRLGFII), 230–250 (FIPVPAVAGFTTGSALNILSG), 278–298 (LPDTTVDAAFGLVSLFILFFT), 315–335 (AFFLTNTLRSAVVVIVGTAIS), 410–430 (LIAMGVTNLIGIFFNAYPATG), 447–467 (IAGIFTAAVVILSLYCLTDAF), 470–490 (IPNAILSAVIIHAVTDLILPM), 505–525 (CIFFISVIVSVFSSIENGIYV), and 527–547 (VCLAAALLLLRIAKPHGSFLG). The STAS domain occupies 578–733 (NLEIQSPPPG…CVEVAAPLRD (156 aa)). A Phosphoserine modification is found at Ser823.

It belongs to the SLC26A/SulP transporter (TC 2.A.53) family.

It is found in the membrane. In terms of biological role, high affinity uptake of sulfate into the cell. This Schizosaccharomyces pombe (strain 972 / ATCC 24843) (Fission yeast) protein is Probable sulfate permease C869.05c.